A 331-amino-acid chain; its full sequence is Low affinity immunoglobulin epsilon Fc receptor (331 aa).

Over 1–23 (MEENEYSGYWEPPRKRCCCARRG) the chain is Cytoplasmic. S-palmitoyl cysteine attachment occurs at residues Cys-17 and Cys-18. The helical; Signal-anchor for type II membrane protein transmembrane segment at 24–49 (TQLMLVGLLSTAMWAGLLALLLLWHW) threads the bilayer. Over 50 to 331 (ETEKNLKQLG…PTRPTPKSEP (282 aa)) the chain is Extracellular. An N-linked (GlcNAc...) asparagine glycan is attached at Asn-65. 3 repeats span residues 71-91 (KDLQ…VQMS), 92-112 (QNLQ…SRLS), and 113-133 (QNLT…SKLS). Asn-114 is a glycosylation site (N-linked (GlcNAc...) asparagine). Intrachain disulfides connect Cys-183–Cys-311, Cys-186–Cys-197, Cys-214–Cys-305, and Cys-282–Cys-296. The C-type lectin domain maps to 185–298 (ICPKNWLHFQ…GQWNDAFCRS (114 aa)). The Ca(2+) site is built by Glu-272, Asn-292, and Asp-293. The O-linked (Xyl...) (chondroitin sulfate) serine glycan is linked to Ser-319.

In terms of assembly, homotrimer. Interacts (via C-type lectin domain) with IGHE (via CH3 region); this interaction regulates IgE homeostasis. Interacts (via C-terminus) with CR2/CD21 (via Sushi domain 1 and 2). N- and O-glycosylated.

The protein resides in the cell membrane. It is found in the secreted. Low-affinity receptor for immunoglobulin E (IgE) and CR2/CD21. Has essential roles in the regulation of IgE production and in the differentiation of B cells. On B cells, initiates IgE-dependent antigen uptake and presentation to T cells. On macrophages, upon IgE binding and antigen cross-linking induces intracellular killing of parasites through activation of L-Arginine-nitric oxide pathway. This is Low affinity immunoglobulin epsilon Fc receptor (Fcer2) from Mus musculus (Mouse).